A 419-amino-acid polypeptide reads, in one-letter code: MNIIDELEWRGAVNQQTDEEGLRKLVEEKKISLYCGVDPTGDSMHIGHLIPFMMMKRFQLAGHHPVILIGGATGTIGDPSGRQSERQLQTLEVVQHNVDALTAQMKKLFDFGGNSEVKMVNNYDWTHEINIIEFLRDYGKNFSINSMLAKDIVASRLDTGISFTEFTYQILQAMDFHHLYTKEDVQLQIGGSDQWGNITSGLDLIRKLEGHEAKVFGLTIPLLLKSDGTKFGKSAGGAVWLDPEKTTPFEFYQFWVNTDDRDVVKYLKYFTFLTKERIDELAVKVETEPHKREAQKVLAEEMTKFVHGEEALLQAVKITAALFSGDIKSLTADEIEQGFKEMPTFQSSKETKNIVEWLVDLGIEPSRRQAREDINNGAISMNGEKVTDVGTDVTVENSFDGRFIIIRKGKKNYSLVKLG.

Residue Y34 participates in L-tyrosine binding. Residues 39–48 (PTGDSMHIGH) carry the 'HIGH' region motif. Residues Y168 and Q172 each coordinate L-tyrosine. Residues 230-234 (KFGKS) carry the 'KMSKS' region motif. K233 contributes to the ATP binding site. In terms of domain architecture, S4 RNA-binding spans 352-418 (KNIVEWLVDL…GKKNYSLVKL (67 aa)).

It belongs to the class-I aminoacyl-tRNA synthetase family. TyrS type 1 subfamily. In terms of assembly, homodimer.

Its subcellular location is the cytoplasm. The enzyme catalyses tRNA(Tyr) + L-tyrosine + ATP = L-tyrosyl-tRNA(Tyr) + AMP + diphosphate + H(+). Its function is as follows. Catalyzes the attachment of tyrosine to tRNA(Tyr) in a two-step reaction: tyrosine is first activated by ATP to form Tyr-AMP and then transferred to the acceptor end of tRNA(Tyr). This Bacillus anthracis protein is Tyrosine--tRNA ligase 2.